Reading from the N-terminus, the 527-residue chain is Amine oxidase [flavin-containing] A (527 aa).

At M1 the chain carries N-acetylmethionine. Residues 1–497 are Cytoplasmic-facing; that stretch reads MASQEKASMA…HSFWERNLPS (497 aa). S383 carries the post-translational modification Phosphoserine. C406 carries the post-translational modification S-8alpha-FAD cysteine. Residues 498–518 traverse the membrane as a helical; Anchor for type IV membrane protein segment; the sequence is VGGLLKIIGFSTSITALWIVV. At 519 to 527 the chain is on the mitochondrial intermembrane side; it reads YKFKLLTRS. The segment at 520-522 is interaction with membrane phospholipid headgroups; that stretch reads KFK.

The protein belongs to the flavin monoamine oxidase family. As to quaternary structure, monomer, homo- or heterodimer (containing two subunits of similar size). Each subunit contains a covalently bound flavin. Enzymatically active as monomer. The cofactor is FAD.

The protein resides in the mitochondrion outer membrane. The catalysed reaction is a secondary aliphatic amine + O2 + H2O = a primary amine + an aldehyde + H2O2. The enzyme catalyses a primary methyl amine + O2 + H2O = an aldehyde + H2O2 + NH4(+). It catalyses the reaction (R)-adrenaline + O2 + H2O = (R)-3,4-dihydroxymandelaldehyde + methylamine + H2O2. It carries out the reaction dopamine + O2 + H2O = 3,4-dihydroxyphenylacetaldehyde + H2O2 + NH4(+). The catalysed reaction is tyramine + O2 + H2O = (4-hydroxyphenyl)acetaldehyde + H2O2 + NH4(+). The enzyme catalyses (R)-noradrenaline + O2 + H2O = (R)-3,4-dihydroxymandelaldehyde + H2O2 + NH4(+). It catalyses the reaction serotonin + O2 + H2O = (5-hydroxyindol-3-yl)acetaldehyde + H2O2 + NH4(+). It carries out the reaction kynuramine + O2 + H2O = 3-(2-aminophenyl)-3-oxopropanal + H2O2 + NH4(+). The catalysed reaction is tryptamine + O2 + H2O = indole-3-acetaldehyde + H2O2 + NH4(+). The enzyme catalyses 2-phenylethylamine + O2 + H2O = 2-phenylacetaldehyde + H2O2 + NH4(+). Catalyzes the oxidative deamination of primary and some secondary amine such as neurotransmitters, with concomitant reduction of oxygen to hydrogen peroxide and has important functions in the metabolism of neuroactive and vasoactive amines in the central nervous system and peripheral tissues. Preferentially oxidizes serotonin. Also catalyzes the oxidative deamination of kynuramine to 3-(2-aminophenyl)-3-oxopropanal that can spontaneously condense to 4-hydroxyquinoline. This chain is Amine oxidase [flavin-containing] A, found in Equus caballus (Horse).